The primary structure comprises 234 residues: Ubiquinone biosynthesis O-methyltransferase (234 aa).

Positions 40, 59, 80, and 123 each coordinate S-adenosyl-L-methionine.

The protein belongs to the methyltransferase superfamily. UbiG/COQ3 family.

The catalysed reaction is a 3-demethylubiquinol + S-adenosyl-L-methionine = a ubiquinol + S-adenosyl-L-homocysteine + H(+). It carries out the reaction a 3-(all-trans-polyprenyl)benzene-1,2-diol + S-adenosyl-L-methionine = a 2-methoxy-6-(all-trans-polyprenyl)phenol + S-adenosyl-L-homocysteine + H(+). The protein operates within cofactor biosynthesis; ubiquinone biosynthesis. Its function is as follows. O-methyltransferase that catalyzes the 2 O-methylation steps in the ubiquinone biosynthetic pathway. This Coxiella burnetii (strain CbuK_Q154) (Coxiella burnetii (strain Q154)) protein is Ubiquinone biosynthesis O-methyltransferase.